The sequence spans 405 residues: Insertion element IS110 uncharacterized 43.6 kDa protein (405 aa).

This is Insertion element IS110 uncharacterized 43.6 kDa protein from Streptomyces coelicolor (strain ATCC BAA-471 / A3(2) / M145).